The following is a 342-amino-acid chain: RNA 3'-terminal phosphate cyclase (342 aa).

Residues glutamine 100 and 283–287 contribute to the ATP site; that span reads FLGDQ. The Tele-AMP-histidine intermediate role is filled by histidine 307.

This sequence belongs to the RNA 3'-terminal cyclase family. Type 1 subfamily.

The protein resides in the cytoplasm. It carries out the reaction a 3'-end 3'-phospho-ribonucleotide-RNA + ATP = a 3'-end 2',3'-cyclophospho-ribonucleotide-RNA + AMP + diphosphate. Its function is as follows. Catalyzes the conversion of 3'-phosphate to a 2',3'-cyclic phosphodiester at the end of RNA. The mechanism of action of the enzyme occurs in 3 steps: (A) adenylation of the enzyme by ATP; (B) transfer of adenylate to an RNA-N3'P to produce RNA-N3'PP5'A; (C) and attack of the adjacent 2'-hydroxyl on the 3'-phosphorus in the diester linkage to produce the cyclic end product. The biological role of this enzyme is unknown but it is likely to function in some aspects of cellular RNA processing. This Pyrococcus abyssi (strain GE5 / Orsay) protein is RNA 3'-terminal phosphate cyclase (rtcA).